Here is a 366-residue protein sequence, read N- to C-terminus: MFCGSPFLGISSWSLASAALCPPSCSFSAGRDLRCDAEVPEVKWTAFVRTLVTRPLSADDVWDFVSTFAHCRLALSWPVGAELRFATSDMLGITQAEVAKLSRRYGCCPGMDLTVIGVTIFAEVSALVLVGECGEIYAFNGVFDDALYRLAEDAFGLWKHGLRRFEPVYGSKCLTETGASFFGGMSGVDDVLAFAVSFDKALVPLPWPRGAFFEFAVPGRPEKRWRLIPGGGVAVVIGRFFGRGVTSPLLRRQRVLMDQVGRVYAASLDGGAVVRLSDSFRAFLAMGVRKLFKNHRFPPGHLWTMQLPVTCVHAPVIDLPAVYQLSPHMVERGMPVASCEASTVVRGDCEETETEESTSGDSVLVC.

This sequence belongs to the herpesviridae US22 family.

The protein is Protein U1 (U1) of Human herpesvirus 6A (strain Uganda-1102) (HHV-6 variant A).